Consider the following 211-residue polypeptide: tRNA (guanosine(18)-2'-O)-methyltransferase (211 aa).

S-adenosyl-L-methionine-binding residues include threonine 103, isoleucine 146, and leucine 155.

This sequence belongs to the class IV-like SAM-binding methyltransferase superfamily. RNA methyltransferase TrmH family. In terms of assembly, homodimer.

It catalyses the reaction guanosine(18) in tRNA + S-adenosyl-L-methionine = 2'-O-methylguanosine(18) in tRNA + S-adenosyl-L-homocysteine + H(+). Catalyzes the 2'-O methylation of guanosine at position 18 in tRNA. Type II methylase, which methylates only a subset of tRNA species. This chain is tRNA (guanosine(18)-2'-O)-methyltransferase, found in Aquifex aeolicus (strain VF5).